We begin with the raw amino-acid sequence, 542 residues long: CTP synthase (542 aa).

Residues 1 to 265 form an amidoligase domain region; sequence MTRYIFVTGG…DDFVVERFGL (265 aa). Ser-13 is a binding site for CTP. Residue Ser-13 coordinates UTP. Residues 14 to 19 and Asp-71 contribute to the ATP site; that span reads SLGKGI. Mg(2+)-binding residues include Asp-71 and Glu-139. Residues 146-148, 186-191, and Lys-222 contribute to the CTP site; these read DIE and KTKPTQ. Residues 186-191 and Lys-222 each bind UTP; that span reads KTKPTQ. The Glutamine amidotransferase type-1 domain maps to 290 to 541; it reads TIAMVGKYME…VKAALAQKNK (252 aa). L-glutamine is bound at residue Gly-351. Cys-378 (nucleophile; for glutamine hydrolysis) is an active-site residue. L-glutamine contacts are provided by residues 379–382, Glu-402, and Arg-469; that span reads LGMQ. Residues His-514 and Glu-516 contribute to the active site.

It belongs to the CTP synthase family. As to quaternary structure, homotetramer.

It catalyses the reaction UTP + L-glutamine + ATP + H2O = CTP + L-glutamate + ADP + phosphate + 2 H(+). The enzyme catalyses L-glutamine + H2O = L-glutamate + NH4(+). The catalysed reaction is UTP + NH4(+) + ATP = CTP + ADP + phosphate + 2 H(+). The protein operates within pyrimidine metabolism; CTP biosynthesis via de novo pathway; CTP from UDP: step 2/2. Allosterically activated by GTP, when glutamine is the substrate; GTP has no effect on the reaction when ammonia is the substrate. The allosteric effector GTP functions by stabilizing the protein conformation that binds the tetrahedral intermediate(s) formed during glutamine hydrolysis. Inhibited by the product CTP, via allosteric rather than competitive inhibition. In terms of biological role, catalyzes the ATP-dependent amination of UTP to CTP with either L-glutamine or ammonia as the source of nitrogen. Regulates intracellular CTP levels through interactions with the four ribonucleotide triphosphates. This Pseudomonas putida (strain GB-1) protein is CTP synthase.